A 129-amino-acid chain; its full sequence is Trefoil factor 2 (129 aa).

A signal peptide spans 1 to 23 (MGPRGAPLLVVVLVLGLHALAEG). 2 consecutive P-type domains span residues 29 to 73 (CRCS…FHPL) and 79 to 122 (EQCV…FFPQ). Disulfide bonds link C29–C127, C31–C58, C42–C57, C52–C69, C81–C107, C91–C106, and C101–C118.

As to expression, expressed in the digestive tract, where it was found predominantly in the stomach with highest expression in the antrum. It is secreted predominantly from antral mucous cells into the lumen of the gastrointestinal tract.

It localises to the secreted. In terms of biological role, inhibits gastrointestinal motility and gastric acid secretion. Could function as a structural component of gastric mucus, possibly by stabilizing glycoproteins in the mucus gel through interactions with carbohydrate side chains. The protein is Trefoil factor 2 (Tff2) of Rattus norvegicus (Rat).